A 170-amino-acid chain; its full sequence is uncharacterized protein (170 aa).

3 helical membrane passes run 31–51 (ILAV…FYIF), 58–78 (LFLI…LLLF), and 133–153 (IDFI…MLLF).

This sequence to M.jannaschii MJ0554 and MJ0587.

The protein resides in the cell membrane. This is an uncharacterized protein from Methanocaldococcus jannaschii (strain ATCC 43067 / DSM 2661 / JAL-1 / JCM 10045 / NBRC 100440) (Methanococcus jannaschii).